Consider the following 954-residue polypeptide: Glycine dehydrogenase (decarboxylating) (954 aa).

Lys704 bears the N6-(pyridoxal phosphate)lysine mark.

The protein belongs to the GcvP family. The glycine cleavage system is composed of four proteins: P, T, L and H. Pyridoxal 5'-phosphate is required as a cofactor.

It catalyses the reaction N(6)-[(R)-lipoyl]-L-lysyl-[glycine-cleavage complex H protein] + glycine + H(+) = N(6)-[(R)-S(8)-aminomethyldihydrolipoyl]-L-lysyl-[glycine-cleavage complex H protein] + CO2. In terms of biological role, the glycine cleavage system catalyzes the degradation of glycine. The P protein binds the alpha-amino group of glycine through its pyridoxal phosphate cofactor; CO(2) is released and the remaining methylamine moiety is then transferred to the lipoamide cofactor of the H protein. This is Glycine dehydrogenase (decarboxylating) from Vibrio cholerae serotype O1 (strain ATCC 39541 / Classical Ogawa 395 / O395).